We begin with the raw amino-acid sequence, 307 residues long: Putative S-adenosyl-L-methionine-dependent methyltransferase MUL_4430 (307 aa).

Residues aspartate 128 and 157 to 158 contribute to the S-adenosyl-L-methionine site; that span reads DL.

The protein belongs to the UPF0677 family.

In terms of biological role, exhibits S-adenosyl-L-methionine-dependent methyltransferase activity. The sequence is that of Putative S-adenosyl-L-methionine-dependent methyltransferase MUL_4430 from Mycobacterium ulcerans (strain Agy99).